A 420-amino-acid chain; its full sequence is Vasopressin V1a receptor (420 aa).

A disordered region spans residues 1-20; that stretch reads MSFPRGSYDPAASNSSPWWP. Over 1-54 the chain is Extracellular; that stretch reads MSFPRGSYDPAASNSSPWWPLSAEDANSSWEAAGHQKGSDPSGDVRNEELAKLE. An N-linked (GlcNAc...) asparagine glycan is attached at Asn-27. Residues 55 to 75 form a helical membrane-spanning segment; the sequence is IAVLAVIFVVAVLGNSSVLLA. Over 76-92 the chain is Cytoplasmic; sequence LHRTPRKTSRMHLFIRH. The helical transmembrane segment at 93–113 threads the bilayer; sequence LSLADLAVAFFQVLPQLCWDI. At 114 to 125 the chain is on the extracellular side; sequence TYRFRGPDWLCR. Cys-124 and Cys-205 are joined by a disulfide. Residues 126-146 traverse the membrane as a helical segment; sequence VVKHLQVFAMFASAYMLVVMT. Residues 147–168 lie on the Cytoplasmic side of the membrane; the sequence is ADRYIAVCHPLKTLQQPTRRSR. The chain crosses the membrane as a helical span at residues 169-189; it reads LMIAASWVLSFLLSTPQYFIF. Residues 190-225 lie on the Extracellular side of the membrane; the sequence is SMIEIEVNNGTKTQDCWATFIQPWGTRAYVTWMTSG. The N-linked (GlcNAc...) asparagine glycan is linked to Asn-198. A helical membrane pass occupies residues 226 to 246; that stretch reads VFVVPVVILGTCYGFICYHIW. The Cytoplasmic portion of the chain corresponds to 247–294; that stretch reads RNVRGKTASRQSKGSGEDVAPFHKGLLVTPCVSSVKTISRAKIRTVKM. The chain crosses the membrane as a helical span at residues 295–315; the sequence is TFVIVTAYILCWAPFFIVQMW. At 316 to 331 the chain is on the extracellular side; it reads SVWDDNFIWTDSENPS. Residues 332 to 352 traverse the membrane as a helical segment; the sequence is ITITALLASLNSCCNPWIYMF. Residues 353–420 are Cytoplasmic-facing; sequence FSGHLLQDCV…RSIRFIPVST (68 aa). S-palmitoyl cysteine attachment occurs at residues Cys-367 and Cys-368. A disordered region spans residues 379 to 411; it reads DSDNMSRRHTSYSNNRSPTNSTGTWKDSPKSSR. A compositionally biased stretch (polar residues) spans 389-403; the sequence is SYSNNRSPTNSTGTW. Phosphoserine is present on Ser-406.

It belongs to the G-protein coupled receptor 1 family. Vasopressin/oxytocin receptor subfamily.

It is found in the cell membrane. Receptor for arginine vasopressin. The activity of this receptor is mediated by G proteins which activate a phosphatidyl-inositol-calcium second messenger system. Involved in social memory formation. This chain is Vasopressin V1a receptor (Avpr1a), found in Microtus ochrogaster (Prairie vole).